Consider the following 483-residue polypeptide: Altronate oxidoreductase (483 aa).

18 to 29 (IIQFGEGNFLRA) lines the NAD(+) pocket.

The protein belongs to the mannitol dehydrogenase family. UxaB subfamily.

It carries out the reaction D-altronate + NAD(+) = keto-D-tagaturonate + NADH + H(+). Its pathway is carbohydrate metabolism; pentose and glucuronate interconversion. This is Altronate oxidoreductase from Yersinia enterocolitica serotype O:8 / biotype 1B (strain NCTC 13174 / 8081).